Consider the following 150-residue polypeptide: Arginine repressor (150 aa).

This sequence belongs to the ArgR family.

It localises to the cytoplasm. The protein operates within amino-acid biosynthesis; L-arginine biosynthesis [regulation]. Functionally, regulates arginine biosynthesis genes. The sequence is that of Arginine repressor from Finegoldia magna (strain ATCC 29328 / DSM 20472 / WAL 2508) (Peptostreptococcus magnus).